A 458-amino-acid polypeptide reads, in one-letter code: Cysteine protease ATG4C (458 aa).

N-acetylmethionine is present on M1. Catalysis depends on C111, which acts as the Nucleophile. Residues D345 and H347 contribute to the active site. The residue at position 451 (S451) is a Phosphoserine. T452 bears the Phosphothreonine mark.

Belongs to the peptidase C54 family.

It localises to the cytoplasm. It carries out the reaction [protein]-C-terminal L-amino acid-glycyl-phosphatidylethanolamide + H2O = [protein]-C-terminal L-amino acid-glycine + a 1,2-diacyl-sn-glycero-3-phosphoethanolamine. Inhibited by N-ethylmaleimide. Functionally, cysteine protease that plays a key role in autophagy by mediating both proteolytic activation and delipidation of ATG8 family proteins. The protease activity is required for proteolytic activation of ATG8 family proteins: cleaves the C-terminal amino acid of ATG8 proteins MAP1LC3 and GABARAPL2, to reveal a C-terminal glycine. Exposure of the glycine at the C-terminus is essential for ATG8 proteins conjugation to phosphatidylethanolamine (PE) and insertion to membranes, which is necessary for autophagy. In addition to the protease activity, also mediates delipidation of ATG8 family proteins. Catalyzes delipidation of PE-conjugated forms of ATG8 proteins during macroautophagy. Compared to ATG4B, the major protein for proteolytic activation of ATG8 proteins, shows weaker ability to cleave the C-terminal amino acid of ATG8 proteins, while it displays stronger delipidation activity. In contrast to other members of the family, weakly or not involved in phagophore growth during mitophagy. This Homo sapiens (Human) protein is Cysteine protease ATG4C.